Reading from the N-terminus, the 588-residue chain is Nuclear hormone receptor family member nhr-23 (588 aa).

Residues 50–73 (LHAKSSLQPSLSIETPKSKENDES) form a disordered region. Polar residues predominate over residues 52-64 (AKSSLQPSLSIET). Residues 160 to 235 (VIPCKVCGDK…LGMSRDAVKF (76 aa)) constitute a DNA-binding region (nuclear receptor). 2 consecutive NR C4-type zinc fingers follow at residues 163–183 (CKVC…CEGC) and 199–223 (CPRQ…LKKC). Residues 345–586 (PEEDVATRVI…ALYKELFTAD (242 aa)) enclose the NR LBD domain.

Belongs to the nuclear hormone receptor family. NR1 subfamily. As to expression, expressed in the germline and oocytes and is a maternal gene product. In males and sperm-producing hermaphrodites, expressed in early pachytene spermatocytes, increasing in level throughout late pachytene. Expression is undetectable in meiotically dividing spermatocytes or mature spermatids.

The protein localises to the nucleus. Orphan nuclear receptor. Transcription factor. Modulates expression of target genes, such as Period protein homolog lin-42 and microRNA let-7, by binding to hormone response elements (HRE). Involved in promoting oscillatory expression of the primary transcripts of let-7 and paralogous microRNAs miR-48, miR-84, and miR-241. Plays a role in normal development and required to regulate each larval molt. Involved in regulating both the frequency and number of molts, acting as part of a negative feedback loop with the let-7 family of microRNAs, perhaps contributing to a self-sustaining molecular-genetic oscillator. Positively modulates expression of collagen and hedgehog-related genes. Involved in development of the gonad and associated epidermal structures. Required in spermatogenesis, acting following the sperm/oocyte cell fate decision, downstream of the canonical sex-determination pathway. Involved in regulating formation of the sperm-specific fibrous body-membranous organelle (FB-MO) complexes, acting independently of transcription regulator spe-44. The chain is Nuclear hormone receptor family member nhr-23 from Caenorhabditis elegans.